A 628-amino-acid polypeptide reads, in one-letter code: Protein SDS23 (628 aa).

The segment at 1–126 (MVNPPQPRQM…NKSSSQSIAP (126 aa)) is disordered. A compositionally biased stretch (polar residues) spans 15 to 24 (RLSTSTSSGP). Low complexity-rich tracts occupy residues 40–71 (QLQH…PGST) and 109–123 (SRHA…SSQS). CBS domains follow at residues 258–319 (LHPK…RFPS) and 334–392 (GSSN…SHLL). The interval 551–609 (GRRTDPQAARNQRRRSSTSTTRSSIDSALSAEGILPSGSAIIGSSNAANTGRRGSVEVS) is disordered. The segment covering 587-599 (SGSAIIGSSNAAN) has biased composition (low complexity).

It belongs to the SDS23 family.

It is found in the cytoplasm. It localises to the nucleus. In terms of biological role, involved in DNA replication and cell separation. In Candida albicans (strain SC5314 / ATCC MYA-2876) (Yeast), this protein is Protein SDS23 (SDS24).